Here is a 100-residue protein sequence, read N- to C-terminus: Urease subunit gamma (100 aa).

The protein belongs to the urease gamma subunit family. As to quaternary structure, heterotrimer of UreA (gamma), UreB (beta) and UreC (alpha) subunits. Three heterotrimers associate to form the active enzyme.

It is found in the cytoplasm. It catalyses the reaction urea + 2 H2O + H(+) = hydrogencarbonate + 2 NH4(+). Its pathway is nitrogen metabolism; urea degradation; CO(2) and NH(3) from urea (urease route): step 1/1. This chain is Urease subunit gamma, found in Prochlorococcus marinus (strain MIT 9303).